Here is a 385-residue protein sequence, read N- to C-terminus: Effector protein hopAB3 (385 aa).

3 disordered regions span residues Met1 to Pro61, Thr73 to Tyr139, and Ala215 to Asn293. Residues Met1–Leu333 are host recognition. Low complexity predominate over residues Ser217–Arg234. Polar residues-rich tracts occupy residues Ala245 to Ser256 and Met265 to Arg283.

The protein belongs to the HopAB family. In terms of assembly, interacts physically with plant cell Pto.

It localises to the secreted. Its function is as follows. Effector protein involved in gene-for-gene resistance in tomato plants. It is recognized by the host Pto resistance protein and elicits Pto and Prf-dependent hypersensitive response (HR) and programmed cell death (PCD), resulting in host immunity. In susceptible plants, promotes virulence, in part, by enhancing the development of disease symptoms and bacterial growth. This chain is Effector protein hopAB3 (hopAB3), found in Pseudomonas syringae pv. maculicola.